The following is a 475-amino-acid chain: UDP-N-acetylmuramate--L-alanine ligase (475 aa).

Residue 117 to 123 (GTHGKTT) coordinates ATP.

It belongs to the MurCDEF family.

The protein resides in the cytoplasm. It catalyses the reaction UDP-N-acetyl-alpha-D-muramate + L-alanine + ATP = UDP-N-acetyl-alpha-D-muramoyl-L-alanine + ADP + phosphate + H(+). Its pathway is cell wall biogenesis; peptidoglycan biosynthesis. Functionally, cell wall formation. The sequence is that of UDP-N-acetylmuramate--L-alanine ligase from Chlorobaculum tepidum (strain ATCC 49652 / DSM 12025 / NBRC 103806 / TLS) (Chlorobium tepidum).